The sequence spans 243 residues: NAD-dependent protein deacylase SIR2rp3 (243 aa).

The region spanning 1–239 is the Deacetylase sirtuin-type domain; the sequence is MKACRCITIL…PTWVDQVLKE (239 aa). An NAD(+)-binding site is contributed by 12-31; it reads GAGISAESGISTFRDSNGLW. The substrate site is built by Tyr-56 and Arg-59. Position 95-98 (95-98) interacts with NAD(+); the sequence is QNVD. His-113 (proton acceptor) is an active-site residue. Zn(2+) is bound by residues Cys-121 and Cys-141. Residues 181-183 and Ala-225 contribute to the NAD(+) site; that span reads GTS.

This sequence belongs to the sirtuin family. Class III subfamily. It depends on Zn(2+) as a cofactor.

It is found in the mitochondrion. It catalyses the reaction N(6)-malonyl-L-lysyl-[protein] + NAD(+) + H2O = 2''-O-malonyl-ADP-D-ribose + nicotinamide + L-lysyl-[protein]. The enzyme catalyses N(6)-succinyl-L-lysyl-[protein] + NAD(+) + H2O = 2''-O-succinyl-ADP-D-ribose + nicotinamide + L-lysyl-[protein]. It carries out the reaction N(6)-glutaryl-L-lysyl-[protein] + NAD(+) + H2O = 2''-O-glutaryl-ADP-D-ribose + nicotinamide + L-lysyl-[protein]. Functionally, NAD-dependent lysine demalonylase, desuccinylase and deglutarylase that specifically removes malonyl, succinyl and glutaryl groups on target proteins. Has weak NAD-dependent protein deacetylase activity; however this activity may not be physiologically relevant in vivo. This chain is NAD-dependent protein deacylase SIR2rp3 (SIR2rp3), found in Leishmania major.